A 277-amino-acid polypeptide reads, in one-letter code: Small ribosomal subunit protein uS2 (277 aa).

Residues 228–241 (YEERLQAETDKDAE) are compositionally biased toward basic and acidic residues. The interval 228 to 277 (YEERLQAETDKDAESSTVQQEENPEADIPESIETKESVSAAADSDLDENE) is disordered.

Belongs to the universal ribosomal protein uS2 family.

This chain is Small ribosomal subunit protein uS2, found in Syntrophus aciditrophicus (strain SB).